A 361-amino-acid polypeptide reads, in one-letter code: Phospho-N-acetylmuramoyl-pentapeptide-transferase (361 aa).

10 consecutive transmembrane segments (helical) span residues 25–45 (RTVL…PAMI), 73–93 (TMGG…WADL), 97–117 (YVWI…VDDY), 134–154 (LFWQ…TAEL), 168–188 (VAVP…IVGT), 200–220 (GLAI…SYVA), 237–257 (AGEL…FLWF), 264–284 (VFMG…VTVI), 289–309 (IVML…MLQV), and 338–358 (QVVV…LSSL).

The protein belongs to the glycosyltransferase 4 family. MraY subfamily. It depends on Mg(2+) as a cofactor.

It is found in the cell inner membrane. The catalysed reaction is UDP-N-acetyl-alpha-D-muramoyl-L-alanyl-gamma-D-glutamyl-meso-2,6-diaminopimeloyl-D-alanyl-D-alanine + di-trans,octa-cis-undecaprenyl phosphate = di-trans,octa-cis-undecaprenyl diphospho-N-acetyl-alpha-D-muramoyl-L-alanyl-D-glutamyl-meso-2,6-diaminopimeloyl-D-alanyl-D-alanine + UMP. It functions in the pathway cell wall biogenesis; peptidoglycan biosynthesis. In terms of biological role, catalyzes the initial step of the lipid cycle reactions in the biosynthesis of the cell wall peptidoglycan: transfers peptidoglycan precursor phospho-MurNAc-pentapeptide from UDP-MurNAc-pentapeptide onto the lipid carrier undecaprenyl phosphate, yielding undecaprenyl-pyrophosphoryl-MurNAc-pentapeptide, known as lipid I. The protein is Phospho-N-acetylmuramoyl-pentapeptide-transferase of Nitrosospira multiformis (strain ATCC 25196 / NCIMB 11849 / C 71).